A 204-amino-acid chain; its full sequence is MIDYLYGTLDSKSTDGITIDVNGIGYEISVPISTFLKLPETRNPIKIYIVESTAGMYGGVISLYGFFTIEEREMYLLIKDKVHGIGAKKAMEYTDKISKSFANFKTAIISKNPSMLNEIFGFTKKTADKLIVALKDKISTVNVLNKEKQTGAETIKNTMVSEAIAGLITLGYKMQQARVAVTNVYEHNENITLEDLIKKSLQYL.

The interval 1–67 (MIDYLYGTLD…GGVISLYGFF (67 aa)) is domain I. The segment at 68–149 (TIEEREMYLL…TVNVLNKEKQ (82 aa)) is domain II. The interval 150–154 (TGAET) is flexible linker. A domain III region spans residues 155-204 (IKNTMVSEAIAGLITLGYKMQQARVAVTNVYEHNENITLEDLIKKSLQYL).

It belongs to the RuvA family. As to quaternary structure, homotetramer. Forms an RuvA(8)-RuvB(12)-Holliday junction (HJ) complex. HJ DNA is sandwiched between 2 RuvA tetramers; dsDNA enters through RuvA and exits via RuvB. An RuvB hexamer assembles on each DNA strand where it exits the tetramer. Each RuvB hexamer is contacted by two RuvA subunits (via domain III) on 2 adjacent RuvB subunits; this complex drives branch migration. In the full resolvosome a probable DNA-RuvA(4)-RuvB(12)-RuvC(2) complex forms which resolves the HJ.

Its subcellular location is the cytoplasm. Functionally, the RuvA-RuvB-RuvC complex processes Holliday junction (HJ) DNA during genetic recombination and DNA repair, while the RuvA-RuvB complex plays an important role in the rescue of blocked DNA replication forks via replication fork reversal (RFR). RuvA specifically binds to HJ cruciform DNA, conferring on it an open structure. The RuvB hexamer acts as an ATP-dependent pump, pulling dsDNA into and through the RuvAB complex. HJ branch migration allows RuvC to scan DNA until it finds its consensus sequence, where it cleaves and resolves the cruciform DNA. This chain is Holliday junction branch migration complex subunit RuvA, found in Endomicrobium trichonymphae.